The chain runs to 416 residues: Choline/ethanolaminephosphotransferase 1 (416 aa).

The disordered stretch occupies residues 1-20 (MSGHRSTRKRCGDSHPESPV). The residue at position 18 (S18) is a Phosphoserine. T40 carries the post-translational modification Phosphothreonine. N86 contacts CDP-choline. 2 helical membrane passes run 89–108 (TIIG…FYCP) and 116–133 (LWAY…QSLD). D133 is a binding site for Mg(2+). N144 is a glycosylation site (N-linked (GlcNAc...) asparagine). Residue E151 coordinates CDP-choline. D154 is a Mg(2+) binding site. H155 (proton acceptor) is an active-site residue. 8 helical membrane-spanning segments follow: residues 156-176 (GCDS…VQLG), 180-199 (DWMF…AHWQ), 210-230 (IIDV…AVIG), 246-267 (MKLL…NYFR), 286-306 (VLSP…IYKK), 315-334 (HPCL…TNKL), 349-363 (TAFI…DQYF), and 368-388 (DEYI…IRYC). D158 is a binding site for Mg(2+).

It belongs to the CDP-alcohol phosphatidyltransferase class-I family. As to quaternary structure, homodimer. Mg(2+) serves as cofactor. It depends on Mn(2+) as a cofactor.

It is found in the endoplasmic reticulum membrane. The protein resides in the nucleus membrane. The enzyme catalyses CDP-ethanolamine + a 1,2-diacyl-sn-glycerol = a 1,2-diacyl-sn-glycero-3-phosphoethanolamine + CMP + H(+). It catalyses the reaction CDP-choline + a 1,2-diacyl-sn-glycerol = a 1,2-diacyl-sn-glycero-3-phosphocholine + CMP + H(+). It carries out the reaction 1-O-alkyl-2-acyl-sn-glycerol + CDP-choline = a 1-O-alkyl-2-acyl-sn-glycero-3-phosphocholine + CMP + H(+). The catalysed reaction is a 1-O-(1Z-alkenyl)-2-acyl-sn-glycerol + CDP-choline = a 1-O-(1Z-alkenyl)-2-acyl-sn-glycero-3-phosphocholine + CMP + H(+). The enzyme catalyses 1,2-dioctanoyl-sn-glycerol + CDP-choline = 1,2-dioctanoyl-sn-glycero-3-phosphocholine + CMP + H(+). It catalyses the reaction 1,2-didecanoyl-sn-glycerol + CDP-choline = 1,2-didecanoyl-sn-glycero-3-phosphocholine + CMP + H(+). It carries out the reaction CDP-choline + 1,2-di-(9Z-octadecenoyl)-sn-glycerol = 1,2-di-(9Z-octadecenoyl)-sn-glycero-3-phosphocholine + CMP + H(+). The catalysed reaction is 1-hexadecanoyl-2-(9Z-octadecenoyl)-sn-glycerol + CDP-choline = 1-hexadecanoyl-2-(9Z-octadecenoyl)-sn-glycero-3-phosphocholine + CMP + H(+). The enzyme catalyses CDP-ethanolamine + 1,2-di-(9Z-octadecenoyl)-sn-glycerol = 1,2-di-(9Z-octadecenoyl)-sn-glycero-3-phosphoethanolamine + CMP + H(+). It catalyses the reaction 1-hexadecanoyl-2-(9Z-octadecenoyl)-sn-glycerol + CDP-ethanolamine = 1-hexadecanoyl-2-(9Z-octadecenoyl)-sn-glycero-3-phosphoethanolamine + CMP + H(+). It carries out the reaction 1-hexadecanoyl-2-(4Z,7Z,10Z,13Z,16Z,19Z-docosahexaenoyl)-sn-glycerol + CDP-choline = 1-hexadecanoyl-2-(4Z,7Z,10Z,13Z,16Z,19Z-docosahexaenoyl)-sn-glycero-3-phosphocholine + CMP + H(+). The catalysed reaction is 1,2-di-(9Z-hexadecenoyl)-sn-glycerol + CDP-choline = 1,2-di-(9Z-hexadecenoyl)-sn-glycero-3-phosphocholine + CMP + H(+). The enzyme catalyses 1,2-di-(9Z-hexadecenoyl)-sn-glycerol + CDP-ethanolamine = 1,2-di-(9Z-hexadecenoyl)-sn-glycero-3-phosphoethanolamine + CMP + H(+). It catalyses the reaction 1-O-hexadecyl-2-acetyl-sn-glycerol + CDP-choline = 1-O-hexadecyl-2-acetyl-sn-glycero-3-phosphocholine + CMP + H(+). It carries out the reaction 1-O-hexadecyl-2-(5Z,8Z,11Z,14Z-eicosatetraenoyl)-sn-glycerol + CDP-choline = 1-O-hexadecyl-2-(5Z,8Z,11Z,14Z)-eicosatetraenoyl-sn-glycero-3-phosphocholine + CMP + H(+). It participates in phospholipid metabolism; phosphatidylethanolamine biosynthesis; phosphatidylethanolamine from ethanolamine: step 3/3. Its pathway is phospholipid metabolism; phosphatidylcholine biosynthesis; phosphatidylcholine from phosphocholine: step 2/2. Its function is as follows. Catalyzes both phosphatidylcholine and phosphatidylethanolamine biosynthesis from CDP-choline and CDP-ethanolamine, respectively. Involved in protein-dependent process of phospholipid transport to distribute phosphatidyl choline to the lumenal surface. Has a higher cholinephosphotransferase activity than ethanolaminephosphotransferase activity. The polypeptide is Choline/ethanolaminephosphotransferase 1 (Mus musculus (Mouse)).